The chain runs to 374 residues: MKFTPAKPPLTGETLESLTARLRERGEPAFRASQILDWVYKKRARSWDGMTNLPKPLRTWLDDTFDLMPATLVLNKQSADVTDKLLLELRDGSLIETVIIRAPQEGVGQDHSRKTICISTQVGCAMGCVFCASGLAGLKRDLSAGEIVAQLLQVCYREDALTPRAHMELASFDNIVVMGMGEPLANYDALIRALTILNADWGLGFGARRITVSTSGLVPKILQLADEPLGFRLAISLHGATDEVREKIMPVNKAFPLAKLLPAVKAFSEKHGRMITLEFILIDGVNDSLEQAEKLRDIALDLHAHVNLIPYNTVEGLAWKRPSITRQERFADVLRARRVSVTLRREKGHDIDAACGQLRLKTEKERQVLAAAKT.

The Proton acceptor role is filled by E96. The 241-residue stretch at 110-350 (DHSRKTICIS…VTLRREKGHD (241 aa)) folds into the Radical SAM core domain. A disulfide bridge connects residues C117 and C355. [4Fe-4S] cluster-binding residues include C124, C128, and C131. S-adenosyl-L-methionine-binding positions include 181–182 (GE), S213, 236–238 (SLH), and N312. C355 acts as the S-methylcysteine intermediate in catalysis.

This sequence belongs to the radical SAM superfamily. RlmN family. Requires [4Fe-4S] cluster as cofactor.

The protein resides in the cytoplasm. The enzyme catalyses adenosine(2503) in 23S rRNA + 2 reduced [2Fe-2S]-[ferredoxin] + 2 S-adenosyl-L-methionine = 2-methyladenosine(2503) in 23S rRNA + 5'-deoxyadenosine + L-methionine + 2 oxidized [2Fe-2S]-[ferredoxin] + S-adenosyl-L-homocysteine. It catalyses the reaction adenosine(37) in tRNA + 2 reduced [2Fe-2S]-[ferredoxin] + 2 S-adenosyl-L-methionine = 2-methyladenosine(37) in tRNA + 5'-deoxyadenosine + L-methionine + 2 oxidized [2Fe-2S]-[ferredoxin] + S-adenosyl-L-homocysteine. Its function is as follows. Specifically methylates position 2 of adenine 2503 in 23S rRNA and position 2 of adenine 37 in tRNAs. This chain is Probable dual-specificity RNA methyltransferase RlmN 3, found in Opitutus terrae (strain DSM 11246 / JCM 15787 / PB90-1).